We begin with the raw amino-acid sequence, 235 residues long: Myc target protein 1 (235 aa).

The Bipartite nuclear localization signal motif lies at 95-113 (RRRRASAPISQWSSSRRSR). A phosphoserine mark is found at Ser-135, Ser-138, Ser-141, and Ser-149.

This sequence belongs to the MYCT1 family. As to expression, down-regulated in gastric cancer tissues.

The protein localises to the nucleus. In terms of biological role, may regulate certain MYC target genes, MYC seems to be a direct upstream transcriptional activator. Does not seem to significantly affect growth cell capacity. Overexpression seems to mediate many of the known phenotypic features associated with MYC, including promotion of apoptosis, alteration of morphology, enhancement of anchorage-independent growth, tumorigenic conversion, promotion of genomic instability, and inhibition of hematopoietic differentiation. This Homo sapiens (Human) protein is Myc target protein 1 (MYCT1).